We begin with the raw amino-acid sequence, 260 residues long: Acetylglutamate kinase (260 aa).

Residues 46 to 47 (GG), arginine 68, and asparagine 160 contribute to the substrate site.

It belongs to the acetylglutamate kinase family. ArgB subfamily.

The protein localises to the cytoplasm. The catalysed reaction is N-acetyl-L-glutamate + ATP = N-acetyl-L-glutamyl 5-phosphate + ADP. Its pathway is amino-acid biosynthesis; L-arginine biosynthesis; N(2)-acetyl-L-ornithine from L-glutamate: step 2/4. Functionally, catalyzes the ATP-dependent phosphorylation of N-acetyl-L-glutamate. In Shewanella putrefaciens (strain CN-32 / ATCC BAA-453), this protein is Acetylglutamate kinase.